Reading from the N-terminus, the 541-residue chain is Zinc finger protein 503 (541 aa).

The segment covering 1 to 18 (MSNSPLGSGSRISHFTTE) has biased composition (polar residues). Disordered stretches follow at residues 1–49 (MSNS…QAGR) and 97–255 (TCSQ…SSSV). A compositionally biased stretch (basic and acidic residues) spans 137-157 (AEDKSSFKPYSKHPDKKDQSA). Low complexity predominate over residues 236–255 (SLSAAPSPTPASSSSSSSSV). The segment at 411-439 (HVCNWVSATGPCDKRFSSSEELLGHLRTH) adopts a C2H2-type zinc-finger fold. Residues 474–511 (GASPGPLTLRSPHHHPLGLSSSRYHPYSKSPLPSGGAP) are disordered.

Belongs to the Elbow/Noc family.

The protein resides in the nucleus. Its function is as follows. May function as a transcriptional repressor. This Xenopus tropicalis (Western clawed frog) protein is Zinc finger protein 503 (znf503).